Here is a 188-residue protein sequence, read N- to C-terminus: Peptidyl-tRNA hydrolase (188 aa).

Residue Tyr15 participates in tRNA binding. His20 functions as the Proton acceptor in the catalytic mechanism. Positions 64, 66, and 112 each coordinate tRNA.

The protein belongs to the PTH family. Monomer.

The protein localises to the cytoplasm. The enzyme catalyses an N-acyl-L-alpha-aminoacyl-tRNA + H2O = an N-acyl-L-amino acid + a tRNA + H(+). Hydrolyzes ribosome-free peptidyl-tRNAs (with 1 or more amino acids incorporated), which drop off the ribosome during protein synthesis, or as a result of ribosome stalling. Functionally, catalyzes the release of premature peptidyl moieties from peptidyl-tRNA molecules trapped in stalled 50S ribosomal subunits, and thus maintains levels of free tRNAs and 50S ribosomes. The chain is Peptidyl-tRNA hydrolase from Cytophaga hutchinsonii (strain ATCC 33406 / DSM 1761 / CIP 103989 / NBRC 15051 / NCIMB 9469 / D465).